The sequence spans 144 residues: Large ribosomal subunit protein uL15 (144 aa).

A disordered region spans residues 1–53 (MRLNTLSPAEGSKHASKRPGRGIGSGLGKTGGRGHKGQKSRSGGGVRRGFEGG). Over residues 21 to 31 (RGIGSGLGKTG) the composition is skewed to gly residues.

Belongs to the universal ribosomal protein uL15 family. In terms of assembly, part of the 50S ribosomal subunit.

Functionally, binds to the 23S rRNA. In Sodalis glossinidius (strain morsitans), this protein is Large ribosomal subunit protein uL15.